The following is a 375-amino-acid chain: E3 ubiquitin-protein ligase RNF34 (375 aa).

The segment at 56-107 (EGPNIVCKACGLSFSVFRKKHVCCDCKKDFCSVCSVLQENLRRCSTCHLLQE) adopts an FYVE-type zinc-finger fold. The 20-residue stretch at 115-134 (LMRLKVKDLRQYLILRNIPI) folds into the SAP 1 domain. The residue at position 169 (serine 169) is a Phosphoserine. The segment at 202-250 (RTLGSGALAQEPSEIASANTEDDEDDDDDDDDDDDDDEENLEDRTPGLT) is disordered. Positions 221 to 242 (TEDDEDDDDDDDDDDDDDEENL) are enriched in acidic residues. Phosphoserine is present on residues serine 257 and serine 259. The region spanning 267–281 (VEGMSVRQLKEILAR) is the SAP 2 domain. The segment at 328–363 (CRICMDAVIDCVLLECGHMVTCTKCGKRMSECPICR) adopts an RING-type zinc-finger fold.

In terms of assembly, interacts with CASP8 and CASP10. Interacts with p53/TP53; involved in p53/TP53 ubiquitination. Interacts (via RING-type zinc finger) with MDM2; the interaction stabilizes MDM2. Interacts (via RING-type zinc finger) with PPARGC1A. Interacts with NOD1. In terms of processing, autoubiquitinated (in vitro). Post-translationally, proteolytically cleaved by caspases upon induction of apoptosis by TNF.

The protein resides in the cell membrane. The protein localises to the endomembrane system. It is found in the nucleus. Its subcellular location is the nucleus speckle. It localises to the cytoplasm. The protein resides in the cytosol. The catalysed reaction is S-ubiquitinyl-[E2 ubiquitin-conjugating enzyme]-L-cysteine + [acceptor protein]-L-lysine = [E2 ubiquitin-conjugating enzyme]-L-cysteine + N(6)-ubiquitinyl-[acceptor protein]-L-lysine.. Its pathway is protein modification; protein ubiquitination. E3 ubiquitin-protein ligase that regulates several biological processes through the ubiquitin-mediated proteasomal degradation of various target proteins. Ubiquitinates the caspases CASP8 and CASP10, promoting their proteasomal degradation, to negatively regulate cell death downstream of death domain receptors in the extrinsic pathway of apoptosis. May mediate 'Lys-48'-linked polyubiquitination of RIPK1 and its subsequent proteasomal degradation thereby indirectly regulating the tumor necrosis factor-mediated signaling pathway. Negatively regulates p53/TP53 through its direct ubiquitination and targeting to proteasomal degradation. Indirectly, may also negatively regulate p53/TP53 through ubiquitination and degradation of SFN. Mediates PPARGC1A proteasomal degradation probably through ubiquitination thereby indirectly regulating the metabolism of brown fat cells. Possibly involved in innate immunity, through 'Lys-48'-linked polyubiquitination of NOD1 and its subsequent proteasomal degradation. The sequence is that of E3 ubiquitin-protein ligase RNF34 (RNF34) from Bos taurus (Bovine).